A 340-amino-acid polypeptide reads, in one-letter code: tRNA N6-adenosine threonylcarbamoyltransferase (340 aa).

Positions 113 and 117 each coordinate Fe cation. Substrate contacts are provided by residues 135 to 139 (LVSGG), aspartate 169, glycine 182, aspartate 186, and asparagine 274. Aspartate 302 serves as a coordination point for Fe cation.

The protein belongs to the KAE1 / TsaD family. Requires Fe(2+) as cofactor.

The protein resides in the cytoplasm. It carries out the reaction L-threonylcarbamoyladenylate + adenosine(37) in tRNA = N(6)-L-threonylcarbamoyladenosine(37) in tRNA + AMP + H(+). In terms of biological role, required for the formation of a threonylcarbamoyl group on adenosine at position 37 (t(6)A37) in tRNAs that read codons beginning with adenine. Is involved in the transfer of the threonylcarbamoyl moiety of threonylcarbamoyl-AMP (TC-AMP) to the N6 group of A37, together with TsaE and TsaB. TsaD likely plays a direct catalytic role in this reaction. The chain is tRNA N6-adenosine threonylcarbamoyltransferase from Mycolicibacterium smegmatis (strain ATCC 700084 / mc(2)155) (Mycobacterium smegmatis).